A 264-amino-acid polypeptide reads, in one-letter code: Neurexophilin-2 (264 aa).

Residues 1-22 form the signal peptide; the sequence is MRLRPLPLVVVPGLLQLLFCDS. The tract at residues 23-90 is II; it reads KEVVHATEGL…WDWLANITEI (68 aa). Residues N86, N139, N149, and N155 are each glycosylated (N-linked (GlcNAc...) asparagine). The interval 91–169 is III; it reads QEPLARTKRR…LVPPSKVVEF (79 aa). Positions 170–178 are IV (linker domain); sequence EVSPQSTLE. The segment at 179–264 is v (Cys-rich); sequence TKESKSFNCR…HSETPYLSSG (86 aa).

Belongs to the neurexophilin family. May be proteolytically processed at the boundary between the N-terminal non-conserved and the central conserved domain in neuron-like cells. In terms of tissue distribution, expressed in brain and kidney.

Its subcellular location is the secreted. In terms of biological role, may be signaling molecules that resemble neuropeptides and that act by binding to alpha-neurexins and possibly other receptors. This chain is Neurexophilin-2 (NXPH2), found in Homo sapiens (Human).